The following is a 542-amino-acid chain: Chaperonin GroEL 3 (542 aa).

Residues 30 to 33 (TLGP), lysine 51, 87 to 91 (DGTTT), glycine 415, and aspartate 494 each bind ATP. Positions 523–542 (KPKKKEPPMPAMPSDMGDYD) are disordered.

It belongs to the chaperonin (HSP60) family. Forms a cylinder of 14 subunits composed of two heptameric rings stacked back-to-back. Interacts with the co-chaperonin GroES.

It is found in the cytoplasm. It catalyses the reaction ATP + H2O + a folded polypeptide = ADP + phosphate + an unfolded polypeptide.. In terms of biological role, together with its co-chaperonin GroES, plays an essential role in assisting protein folding. The GroEL-GroES system forms a nano-cage that allows encapsulation of the non-native substrate proteins and provides a physical environment optimized to promote and accelerate protein folding. The protein is Chaperonin GroEL 3 of Syntrophus aciditrophicus (strain SB).